Consider the following 242-residue polypeptide: Biosynthetic peptidoglycan transglycosylase (242 aa).

Residues 19–39 (LMVVLAVFWGGGIALFSVAPV) traverse the membrane as a helical segment.

Belongs to the glycosyltransferase 51 family.

The protein localises to the cell inner membrane. The enzyme catalyses [GlcNAc-(1-&gt;4)-Mur2Ac(oyl-L-Ala-gamma-D-Glu-L-Lys-D-Ala-D-Ala)](n)-di-trans,octa-cis-undecaprenyl diphosphate + beta-D-GlcNAc-(1-&gt;4)-Mur2Ac(oyl-L-Ala-gamma-D-Glu-L-Lys-D-Ala-D-Ala)-di-trans,octa-cis-undecaprenyl diphosphate = [GlcNAc-(1-&gt;4)-Mur2Ac(oyl-L-Ala-gamma-D-Glu-L-Lys-D-Ala-D-Ala)](n+1)-di-trans,octa-cis-undecaprenyl diphosphate + di-trans,octa-cis-undecaprenyl diphosphate + H(+). It functions in the pathway cell wall biogenesis; peptidoglycan biosynthesis. Functionally, peptidoglycan polymerase that catalyzes glycan chain elongation from lipid-linked precursors. This is Biosynthetic peptidoglycan transglycosylase from Shigella dysenteriae serotype 1 (strain Sd197).